The primary structure comprises 590 residues: MDRNSVIGFALIAAIMIVWLQFMKPEQKLGLEKAAASREAVQKTPAAALPAPSAAVAAAARADSLGSFAQASVGTEKTITVSNDLFTATLSSKGATLKSLVLKKHLDGNRKPFNLISASDKGALSMLFLSSDGKKIDTRDLYFRSLDAKTTETVTGKEKLSVSYVLDVDATRSIQITYTFTGDSYVVDYDLKLNGFGSSIAGNEYQLDWDGGLNYSEKDQVDESHNAIASAYLGGSVVKLDAKDAKKTWQDEESGKAQWVAVRNKYFVAAIMPQRTTDGIYLHGTKKDGSDFKNYVAALKMSFPAGQQSVDDHYRLYVGPLDYNTVKSLNADLEKIMDFGWDWLTRPFAEYLILPIFNWMNKYVTNYGLIIIIFAFLIKLVTWPLSLASTKSMKKMSALQPVMKELQEKYKDNPAKLQSELGRIYKEAGVNPLGGCLPTVIQMPLLFAMFYVFRSSIQLRQHGFLWVKDLSVPDSVYHFAFKLPLYGDHIAIMPILMAVTVFFQQKITPNAQSNEQTKIMMWLFPAMMLFFFNNMPAGLALYYLMFNIFSVAQQAYMNATITDEEKAAAAMQVAAATKPAQSAKKGGKKK.

5 helical membrane-spanning segments follow: residues 5-25 (SVIG…FMKP), 368-388 (GLII…LSLA), 433-453 (LGGC…FYVF), 483-503 (LPLY…TVFF), and 519-539 (IMMW…PAGL).

This sequence belongs to the OXA1/ALB3/YidC family. Type 1 subfamily. As to quaternary structure, interacts with the Sec translocase complex via SecD. Specifically interacts with transmembrane segments of nascent integral membrane proteins during membrane integration.

Its subcellular location is the cell inner membrane. In terms of biological role, required for the insertion and/or proper folding and/or complex formation of integral membrane proteins into the membrane. Involved in integration of membrane proteins that insert both dependently and independently of the Sec translocase complex, as well as at least some lipoproteins. Aids folding of multispanning membrane proteins. The protein is Membrane protein insertase YidC of Chlorobaculum tepidum (strain ATCC 49652 / DSM 12025 / NBRC 103806 / TLS) (Chlorobium tepidum).